Consider the following 520-residue polypeptide: O-methyltransferase cicE (520 aa).

S-adenosyl-L-methionine contacts are provided by residues 300-301 (GG), D323, 355-356 (NF), and R371.

The protein belongs to the class I-like SAM-binding methyltransferase superfamily. Cation-independent O-methyltransferase family.

Its pathway is phytotoxin biosynthesis. In terms of biological role, O-methyltransferase; part of the gene cluster that mediates the biosynthesis of cichorine, a phytotoxin active against knapweed, corn, and soybeans. The first step in the pathway is performed by the non-reducing polyketide synthase pkbA that condenses one acetyl-CoA starter unit with 3 malonyl-CoA units. PkbA also catalyzes one methylation step to produce 3-methylorsellinate. The nonribosomal peptide synthase-like protein cicB, the cytochrome P450 monooxygenase cicH and the O-methyltransferase cicE are involved in the conversion of 3-methylorsellinate into nidulol. CicB converts 3-methylorsellinate to a yet unidentified intermediate, cicH may play a ring-closing role for cichorine and cicE is plausibly responsible for the methylation of one of the phenol groups. The oxidoreductase cicC acts downstream with still unidentified enzymes to further convert nidulol into cichorine. In Emericella nidulans (strain FGSC A4 / ATCC 38163 / CBS 112.46 / NRRL 194 / M139) (Aspergillus nidulans), this protein is O-methyltransferase cicE.